The following is a 425-amino-acid chain: Dihydroorotase (425 aa).

His59 and His61 together coordinate Zn(2+). Residues 61–63 (HLR) and Asn93 each bind substrate. Residues Asp151, His178, and His231 each coordinate Zn(2+). A substrate-binding site is contributed by Asn277. Asp304 is a Zn(2+) binding site. Asp304 is an active-site residue. Substrate is bound by residues His308 and 322–323 (FG).

The protein belongs to the metallo-dependent hydrolases superfamily. DHOase family. Class I DHOase subfamily. The cofactor is Zn(2+).

The catalysed reaction is (S)-dihydroorotate + H2O = N-carbamoyl-L-aspartate + H(+). It participates in pyrimidine metabolism; UMP biosynthesis via de novo pathway; (S)-dihydroorotate from bicarbonate: step 3/3. Functionally, catalyzes the reversible cyclization of carbamoyl aspartate to dihydroorotate. The sequence is that of Dihydroorotase from Staphylococcus epidermidis (strain ATCC 12228 / FDA PCI 1200).